We begin with the raw amino-acid sequence, 372 residues long: Gibberellin 20 oxidase 1 (372 aa).

One can recognise a Fe2OG dioxygenase domain in the interval 209 to 309 (RNDSIMRLNY…RRSLAFFLCP (101 aa)). Fe cation is bound by residues His234, Asp236, and His290. Arg300 is a catalytic residue.

The protein belongs to the iron/ascorbate-dependent oxidoreductase family. GA20OX subfamily. Fe(2+) serves as cofactor. The cofactor is L-ascorbate. As to expression, preferentially expressed in reproductive organs. Expressed in the epithelium of embryos and the tapetum of anthers. Expressed at low levels in the shoot apical meristem.

It carries out the reaction gibberellin A12 + 2 2-oxoglutarate + 3 O2 + H(+) = gibberellin A9 + 2 succinate + 3 CO2 + 2 H2O. The enzyme catalyses gibberellin A53 + 2 2-oxoglutarate + 3 O2 + H(+) = gibberellin A20 + 2 succinate + 3 CO2 + 2 H2O. In terms of biological role, key oxidase enzyme in the biosynthesis of gibberellin. Catalyzes the conversion of GA12 and GA53 to GA9 and GA20 respectively, via a three-step oxidation at C-20 of the GA skeleton. The polypeptide is Gibberellin 20 oxidase 1 (Oryza sativa subsp. japonica (Rice)).